Here is a 527-residue protein sequence, read N- to C-terminus: Benzoate--CoA ligase (527 aa).

Belongs to the ATP-dependent AMP-binding enzyme family. Benzoate-CoA ligase subfamily. In terms of assembly, monomer.

It carries out the reaction benzoate + ATP + CoA = benzoyl-CoA + AMP + diphosphate. In terms of biological role, catalyzes the ligation of benzoate and CoA to form benzoyl-CoA at the expense of ATP. The enzyme also ligates 2-aminobenzoate and CoA. The enzyme shows activity toward a number of benzoate derivatives. The chain is Benzoate--CoA ligase (bclA) from Thauera aromatica.